Reading from the N-terminus, the 546-residue chain is MAAKEIIFHDGARTKLVEGVNLLANAVKVTLGPKGRNVVLERSFGSPVVTKDGVSVAKEIELADKVQNIGAQLVKEVASKTSDAAGDGTTTATVLAQAIVREGQKYVAAGLNPLDLKRGIDKAVAAAVEELKKISKPTTTSKEIAQVATISANGEESIGQRIAEAIDRVGKEGVITVEDGKSLADELDVVEGLQFDRGYLSPYFINNPDRQLAVLDEPFILLHDKKISNIRDLLPVLEQVAKAGRPLLIVAEDVEGEALATLVVNNIRGTLKTVAVKAPGFGDRRKALLEDIAILTGGQVIAEETGLTLEKATLQELGRAKRIEVGKENTTLIDGAGDKPNIDARVKQIRAQIADATSDYDREKLQERVAKLAGGVAVIKVGGATEVEVKEKKDRVDDALHATRAAVEEGIVPGGGVALIRVKQAIAELTGANVDQKAGINIVLRALEEPLRQIVANAGEEASVVVATVAAGSGNYGYNAATGEYGDLVESGVLDPTKVTRTALQNAASIAGLLLTTDATVHEAPKDAPPAQPAGVPGAGGTGFDF.

ATP-binding positions include 30–33 (TLGP), lysine 51, 87–91 (DGTTT), glycine 415, 479–481 (NAA), and aspartate 495. A disordered region spans residues 524-546 (APKDAPPAQPAGVPGAGGTGFDF). Positions 537–546 (PGAGGTGFDF) are enriched in gly residues.

This sequence belongs to the chaperonin (HSP60) family. In terms of assembly, forms a cylinder of 14 subunits composed of two heptameric rings stacked back-to-back. Interacts with the co-chaperonin GroES.

The protein resides in the cytoplasm. The catalysed reaction is ATP + H2O + a folded polypeptide = ADP + phosphate + an unfolded polypeptide.. Together with its co-chaperonin GroES, plays an essential role in assisting protein folding. The GroEL-GroES system forms a nano-cage that allows encapsulation of the non-native substrate proteins and provides a physical environment optimized to promote and accelerate protein folding. This Burkholderia thailandensis (strain ATCC 700388 / DSM 13276 / CCUG 48851 / CIP 106301 / E264) protein is Chaperonin GroEL 2.